A 343-amino-acid polypeptide reads, in one-letter code: Protein RecA (343 aa).

Residue 64–71 (GPESSGKT) participates in ATP binding.

It belongs to the RecA family.

It localises to the cytoplasm. Its function is as follows. Can catalyze the hydrolysis of ATP in the presence of single-stranded DNA, the ATP-dependent uptake of single-stranded DNA by duplex DNA, and the ATP-dependent hybridization of homologous single-stranded DNAs. It interacts with LexA causing its activation and leading to its autocatalytic cleavage. The polypeptide is Protein RecA (Bacillus cereus (strain ATCC 14579 / DSM 31 / CCUG 7414 / JCM 2152 / NBRC 15305 / NCIMB 9373 / NCTC 2599 / NRRL B-3711)).